The primary structure comprises 125 residues: MARLFGTEIPNEKRIEASLPYIYGIGRSTSKRILEQAGINPDIRTGQLTDEQLTKIVQVITTDGILIEGDLRREKQSILKRLTSINCYRGQRHRRGLPVRGQRTRTNARTRKGKKKTVGAQAKKK.

The segment at 92 to 125 (RHRRGLPVRGQRTRTNARTRKGKKKTVGAQAKKK) is disordered.

This sequence belongs to the universal ribosomal protein uS13 family. Part of the 30S ribosomal subunit. Forms a loose heterodimer with protein S19. Forms two bridges to the 50S subunit in the 70S ribosome.

Functionally, located at the top of the head of the 30S subunit, it contacts several helices of the 16S rRNA. In the 70S ribosome it contacts the 23S rRNA (bridge B1a) and protein L5 of the 50S subunit (bridge B1b), connecting the 2 subunits; these bridges are implicated in subunit movement. Contacts the tRNAs in the A and P-sites. This Akkermansia muciniphila (strain ATCC BAA-835 / DSM 22959 / JCM 33894 / BCRC 81048 / CCUG 64013 / CIP 107961 / Muc) protein is Small ribosomal subunit protein uS13.